We begin with the raw amino-acid sequence, 263 residues long: Sulfur carrier protein FdhD (263 aa).

Cys107 acts as the Cysteine persulfide intermediate in catalysis.

This sequence belongs to the FdhD family.

It is found in the cytoplasm. Its function is as follows. Required for formate dehydrogenase (FDH) activity. Acts as a sulfur carrier protein that transfers sulfur from IscS to the molybdenum cofactor prior to its insertion into FDH. The chain is Sulfur carrier protein FdhD from Bacillus licheniformis (strain ATCC 14580 / DSM 13 / JCM 2505 / CCUG 7422 / NBRC 12200 / NCIMB 9375 / NCTC 10341 / NRRL NRS-1264 / Gibson 46).